The chain runs to 56 residues: UPF0391 membrane protein HCH_04387 (56 aa).

Helical transmembrane passes span 6–26 (IVFF…IAAA) and 30–50 (IAQI…IAGG).

It belongs to the UPF0391 family.

The protein resides in the cell membrane. The protein is UPF0391 membrane protein HCH_04387 of Hahella chejuensis (strain KCTC 2396).